The chain runs to 444 residues: Type VII secretion system protein EssB (444 aa).

The Cytoplasmic segment spans residues M1–W229. The helical transmembrane segment at V230–F250 threads the bilayer. The Extracellular segment spans residues S251 to K444. Residues K366–K444 are disordered. Positions S372–K444 are enriched in basic and acidic residues. A coiled-coil region spans residues L387 to K443.

This sequence belongs to the EssB family. May oligomerize and interact with other membrane components to form the Ess system. Interacts with EsaA.

The protein resides in the cell membrane. Component of the type VII secretion system (Ess). Required for the secretion of EsxA and proper accumulation of EssB and EssD. This Staphylococcus aureus (strain USA300) protein is Type VII secretion system protein EssB.